The sequence spans 311 residues: N-acetylmuramic acid 6-phosphate etherase (311 aa).

One can recognise an SIS domain in the interval 64-227; sequence IYQRLIDNGR…SSGVMIKLGK (164 aa). Residue Glu-92 is the Proton donor of the active site. Glu-123 is a catalytic residue.

This sequence belongs to the GCKR-like family. MurNAc-6-P etherase subfamily. In terms of assembly, homodimer.

The catalysed reaction is N-acetyl-D-muramate 6-phosphate + H2O = N-acetyl-D-glucosamine 6-phosphate + (R)-lactate. Its pathway is amino-sugar metabolism; N-acetylmuramate degradation. In terms of biological role, specifically catalyzes the cleavage of the D-lactyl ether substituent of MurNAc 6-phosphate, producing GlcNAc 6-phosphate and D-lactate. This chain is N-acetylmuramic acid 6-phosphate etherase, found in Prochlorococcus marinus (strain SARG / CCMP1375 / SS120).